A 98-amino-acid chain; its full sequence is Putative zinc finger protein ORF98b (98 aa).

The segment at 54–77 (GFCPYCHNHYRTFGILANHIMRSH) adopts a C2H2-type zinc-finger fold.

The chain is Putative zinc finger protein ORF98b from Acidianus convivator (ATV).